We begin with the raw amino-acid sequence, 351 residues long: Outer membrane protein A (351 aa).

A signal peptide spans 1–21 (MKKTAIAIAVALAGFATVAQA). 8 beta stranded membrane-spanning segments follow: residues 27 to 37 (TWYTGAKLGWS), 55 to 66 (QLGAGAFGGYQV), 70 to 78 (VGFEMGYDW), 96 to 107 (QGVQLTAKLGYP), 112 to 120 (LDIYTRLGG), 147 to 156 (PVFAGGVEWA), 161 to 168 (IATRLEYQ), and 187 to 195 (LLSLGVSYR). A run of 4 repeats spans residues 206-207 (AP), 208-209 (AP), 210-211 (AP), and 212-213 (AP). Residues 206 to 213 (APAPAPAP) are 4 X 2 AA tandem repeats of A-P. One can recognise an OmpA-like domain in the interval 215-343 (VQTKHFTLKS…RVEIEVKGIK (129 aa)). A disulfide bond links Cys316 and Cys328.

The protein belongs to the outer membrane OOP (TC 1.B.6) superfamily. OmpA family. As to quaternary structure, monomer and homodimer.

The protein localises to the cell outer membrane. With TolR probably plays a role in maintaining the position of the peptidoglycan cell wall in the periplasm. Acts as a porin with low permeability that allows slow penetration of small solutes; an internal gate slows down solute passage. Functionally, required for conjugation with F-type plasmids; probably serves as the mating receptor on recipient cells. This chain is Outer membrane protein A, found in Escherichia fergusonii (strain ATCC 35469 / DSM 13698 / CCUG 18766 / IAM 14443 / JCM 21226 / LMG 7866 / NBRC 102419 / NCTC 12128 / CDC 0568-73).